We begin with the raw amino-acid sequence, 334 residues long: Probable tRNA pseudouridine synthase B (334 aa).

Catalysis depends on aspartate 82, which acts as the Nucleophile. The 76-residue stretch at 250–325 (LPKIWIKDSA…IAVDVEKVFM (76 aa)) folds into the PUA domain.

It belongs to the pseudouridine synthase TruB family. Type 2 subfamily.

It catalyses the reaction uridine(55) in tRNA = pseudouridine(55) in tRNA. In terms of biological role, could be responsible for synthesis of pseudouridine from uracil-55 in the psi GC loop of transfer RNAs. The protein is Probable tRNA pseudouridine synthase B of Pyrococcus horikoshii (strain ATCC 700860 / DSM 12428 / JCM 9974 / NBRC 100139 / OT-3).